The primary structure comprises 546 residues: MAAKDVKFGDSARSKMVAGVNILADAVKVTLGPKGRNVVLDRSFGAPTITKDGVSVAKEIELKDKFENMGAQMVKEVASKTSDVAGDGTTTATVLAQAIVQEGMKFVAAGMNPMDLKRGIDKAVVSLVGEIAKIAKPCATSKEIAQVGSISANSDSDIGEIIANAMEKVGKEGVITVEDGKSLNNELDVVEGMQFDRGYLSPYFINNQDKQIAALDNPFILLFDKKISNIRDLLPVLEQVAKSGRPLLIIAEDVEGEALATLVVNTIRGILKVVAVKAPGFGDRRKAMLTDIAVLTGGEVIAEEVGLTLEKATLDQLGQAKRVEVGKENTTIIDGAGEAATIQARVGEIRKQIEEATSDYDREKLQERVAKLAGGVAVIKVGAATEVEMKEKKARVEDALHATRAAVEEGVVPGGGVALLRARATLENLKTDNAEQEAGVKIVLRAIEAPLRQIVKNAGDEPSVVVNKVLEGKGNFGYNAASGEYGDMLEMGVLDPAKVTRSALQHAASVAGLMLTTDCMIAELPEDKPAAGMPDMGGMGGMGGMM.

Residues 30 to 33 (TLGP), Lys-51, 87 to 91 (DGTTT), Gly-415, 479 to 481 (NAA), and Asp-495 each bind ATP.

It belongs to the chaperonin (HSP60) family. As to quaternary structure, forms a cylinder of 14 subunits composed of two heptameric rings stacked back-to-back. Interacts with the co-chaperonin GroES.

The protein localises to the cytoplasm. It carries out the reaction ATP + H2O + a folded polypeptide = ADP + phosphate + an unfolded polypeptide.. Together with its co-chaperonin GroES, plays an essential role in assisting protein folding. The GroEL-GroES system forms a nano-cage that allows encapsulation of the non-native substrate proteins and provides a physical environment optimized to promote and accelerate protein folding. The sequence is that of Chaperonin GroEL 2 from Chromobacterium violaceum (strain ATCC 12472 / DSM 30191 / JCM 1249 / CCUG 213 / NBRC 12614 / NCIMB 9131 / NCTC 9757 / MK).